Here is a 1373-residue protein sequence, read N- to C-terminus: Capping protein, Arp2/3 and myosin-I linker protein 3 (1373 aa).

Positions 126–151 (RGNADTPEGPRDTSPNSETSTSTTHS) are disordered. The span at 138–151 (TSPNSETSTSTTHS) shows a compositional bias: low complexity. LRR repeat units lie at residues 242–269 (SGSLEELVLDNAGLKTDFVQKLAGVFGE), 272–299 (SCVLHALTLSHNPIEDKGFLSLSQQLLC), 333–358 (ASSLRYLDLSKNPGLLATDEANALYS), 390–417 (CSHLTYLNLARNSCSHRKGREAPPAFKQ), 422–446 (AYTLSHVNLSATRLPLEALRALLQG), 453–475 (LSDLHLDLSSCELRSAGAQALQE), 480–507 (VTCIGSLDLSDNGFDSDLLTLVPALGKN), 510–536 (LKHLFLGKNFNVKAKTLEEILHKLVQL), 541–564 (DCSLQSLSVADSRLKLRTSILINA), and 568–591 (NTCLAKVDLSGNGMEDIGAKMLSK). Disordered stretches follow at residues 864–902 (RTLSDPPGGAGPGQDPSSRGRGRSHDHEETDDELGTNID) and 970–1373 (LRHQ…PGTD). Positions 981 to 997 (PRTTPPGPGRPSVPVPG) are enriched in pro residues. Positions 1007 to 1022 (RLDEGLEDFFSRRVMD) are enriched in basic and acidic residues. Residues 1047–1062 (QKRRRRGLFHFRRPRS) are compositionally biased toward basic residues. Positions 1078-1097 (LPPPPPPPPTQESPPSPDPP) are enriched in pro residues. Low complexity predominate over residues 1098 to 1108 (SLGNNSSPCWS). Residues 1218–1228 (RRAEATWHIAE) are compositionally biased toward basic and acidic residues. The segment covering 1232–1243 (PNHSCQSPSPAS) has biased composition (polar residues). Residues 1269–1278 (PIGPRPPKPV) are compositionally biased toward pro residues. Over residues 1345–1358 (QSCDKLEPDRRRPP) the composition is skewed to basic and acidic residues.

This sequence belongs to the CARMIL family. In terms of tissue distribution, widely expressed, with much higher levels in fetal tissues than in adult ones. Highly expressed in newborn brain.

It localises to the cytoplasm. Its subcellular location is the cell membrane. The chain is Capping protein, Arp2/3 and myosin-I linker protein 3 (Carmil3) from Rattus norvegicus (Rat).